A 171-amino-acid chain; its full sequence is Small ribosomal subunit protein bS16 (171 aa).

The interval 114-171 (EGGPTTEAAKPKKKAATSGAKKAAKAAEPEAAASEAAEPEAAAAPAEGGEQAESSAES) is disordered. The segment covering 142–171 (PEAAASEAAEPEAAAAPAEGGEQAESSAES) has biased composition (low complexity).

It belongs to the bacterial ribosomal protein bS16 family.

In Mycolicibacterium paratuberculosis (strain ATCC BAA-968 / K-10) (Mycobacterium paratuberculosis), this protein is Small ribosomal subunit protein bS16.